A 148-amino-acid polypeptide reads, in one-letter code: Large ribosomal subunit protein bL9 (148 aa).

The protein belongs to the bacterial ribosomal protein bL9 family.

Binds to the 23S rRNA. The chain is Large ribosomal subunit protein bL9 from Streptomyces avermitilis (strain ATCC 31267 / DSM 46492 / JCM 5070 / NBRC 14893 / NCIMB 12804 / NRRL 8165 / MA-4680).